The following is a 234-amino-acid chain: ATP-dependent dethiobiotin synthetase BioD (234 aa).

12-17 contributes to the ATP binding site; the sequence is GAGKTI. Mg(2+) is bound at residue T16. The active site involves K39. Substrate is bound at residue T43. Residues D47, 108–111, 168–169, and 200–202 each bind ATP; these read EGLG, SC, and PYL. 2 residues coordinate Mg(2+): D47 and E108.

This sequence belongs to the dethiobiotin synthetase family. Homodimer. Mg(2+) serves as cofactor.

Its subcellular location is the cytoplasm. The enzyme catalyses (7R,8S)-7,8-diammoniononanoate + CO2 + ATP = (4R,5S)-dethiobiotin + ADP + phosphate + 3 H(+). It catalyses the reaction (7R,8S)-8-amino-7-(carboxyamino)nonanoate + ATP = (4R,5S)-dethiobiotin + ADP + phosphate + H(+). It functions in the pathway cofactor biosynthesis; biotin biosynthesis; biotin from 7,8-diaminononanoate: step 1/2. Its function is as follows. Catalyzes a mechanistically unusual reaction, the ATP-dependent insertion of CO2 between the N7 and N8 nitrogen atoms of 7,8-diaminopelargonic acid (DAPA, also called 7,8-diammoniononanoate) to form a ureido ring. This cyanobacterium does not encode bioA (which catalyzes the formation of the precursor for this reaction in the cannonical pathway), instead it encodes bioU, which replaces bioA and also performs the first half of the cannonical BioD reaction. Thus in this organism BioD has a different substrate. This Rippkaea orientalis (strain PCC 8801 / RF-1) (Cyanothece sp. (strain PCC 8801)) protein is ATP-dependent dethiobiotin synthetase BioD.